The following is a 396-amino-acid chain: Metacaspase-1 (396 aa).

Residues 1 to 20 (MSGYPGQGYQGQGYGQGYGQ) are compositionally biased toward gly residues. The segment at 1–86 (MSGYPGQGYQ…PQGMQQFGHG (86 aa)) is disordered. Low complexity predominate over residues 47-62 (HYQYGPPQGGYQYPPQ). Residues 72–81 (QAHQPPQGMQ) show a composition bias toward polar residues. Residues histidine 186 and cysteine 242 contribute to the active site.

The protein belongs to the peptidase C14B family.

Its function is as follows. Involved in cell death (apoptosis). The sequence is that of Metacaspase-1 (MCA1) from Pyricularia oryzae (strain 70-15 / ATCC MYA-4617 / FGSC 8958) (Rice blast fungus).